The primary structure comprises 805 residues: Sucrose synthase 1 (805 aa).

Residues 274 to 751 are GT-B glycosyltransferase; the sequence is MVFNVVILSP…GLQRIYEKYT (478 aa).

This sequence belongs to the glycosyltransferase 1 family. Plant sucrose synthase subfamily.

It catalyses the reaction an NDP-alpha-D-glucose + D-fructose = a ribonucleoside 5'-diphosphate + sucrose + H(+). Its function is as follows. Sucrose-cleaving enzyme that provides UDP-glucose and fructose for various metabolic pathways. The chain is Sucrose synthase 1 from Tulipa gesneriana (Garden tulip).